We begin with the raw amino-acid sequence, 241 residues long: Uridylate kinase (241 aa).

ATP is bound at residue 12–15; sequence KLSG. Positions 20-25 are involved in allosteric activation by GTP; it reads GATGYG. Glycine 54 lines the UMP pocket. The ATP site is built by glycine 55 and arginine 59. UMP contacts are provided by residues aspartate 74 and 135–142; that span reads TGNPYMTT. ATP is bound by residues asparagine 163, tyrosine 169, and aspartate 172.

The protein belongs to the UMP kinase family. Homohexamer.

The protein localises to the cytoplasm. The enzyme catalyses UMP + ATP = UDP + ADP. It participates in pyrimidine metabolism; CTP biosynthesis via de novo pathway; UDP from UMP (UMPK route): step 1/1. Its activity is regulated as follows. Allosterically activated by GTP. Inhibited by UTP. Functionally, catalyzes the reversible phosphorylation of UMP to UDP. The sequence is that of Uridylate kinase from Dehalococcoides mccartyi (strain CBDB1).